A 372-amino-acid chain; its full sequence is L-selectin (372 aa).

The N-terminal stretch at 1–28 (MIFPWKCQSTQRDLWNIFKLWGWTMLCC) is a signal peptide. Positions 29-38 (DFLAHHGTDC) are excised as a propeptide. The Extracellular segment spans residues 39–332 (WTYHYSEKPM…FSMIKEGDYN (294 aa)). In terms of domain architecture, C-type lectin spans 55–155 (RFCRDNYTDL…ACHKLKAALC (101 aa)). 9 cysteine pairs are disulfide-bonded: C57–C155, C128–C147, C160–C171, C165–C180, C182–C191, C197–C241, C227–C254, C259–C303, and C289–C316. N-linked (GlcNAc...) asparagine glycans are attached at residues N60 and N104. Ca(2+)-binding residues include E118, N120, E126, N143, and D144. Positions 156 to 192 (YTASCQPWSCSGHGECVEIINNYTCNCDVGYYGPQCQ) constitute an EGF-like domain. Residue N177 is glycosylated (N-linked (GlcNAc...) asparagine). Sushi domains follow at residues 195-256 (IQCE…TCQV) and 257-318 (IQCE…ICQK). N-linked (GlcNAc...) asparagine glycosylation is found at N232, N246, and N271. The chain crosses the membrane as a helical span at residues 333–355 (PLFIPVAVMVTAFSGLAFIIWLA). Over 356 to 372 (RRLKKGKKSKRSMNDPY) the chain is Cytoplasmic.

The protein belongs to the selectin/LECAM family. Interaction with SELPLG/PSGL1 and PODXL2 is required for promoting recruitment and rolling of leukocytes. This interaction is dependent on the sialyl Lewis X glycan modification of SELPLG and PODXL2, and tyrosine sulfation modifications of SELPLG. Sulfation on 'Tyr-51' of SELPLG is important for L-selectin binding. In terms of processing, N-glycosylated. Expressed in B-cell lines and T-lymphocytes.

The protein localises to the cell membrane. In terms of biological role, calcium-dependent lectin that mediates cell adhesion by binding to glycoproteins on neighboring cells. Mediates the adherence of lymphocytes to endothelial cells of high endothelial venules in peripheral lymph nodes. Promotes initial tethering and rolling of leukocytes in endothelia. This chain is L-selectin (SELL), found in Homo sapiens (Human).